The sequence spans 291 residues: Elongation factor Ts (291 aa).

Residues 80–83 (TDFV) form an involved in Mg(2+) ion dislocation from EF-Tu region.

Belongs to the EF-Ts family.

The protein resides in the cytoplasm. In terms of biological role, associates with the EF-Tu.GDP complex and induces the exchange of GDP to GTP. It remains bound to the aminoacyl-tRNA.EF-Tu.GTP complex up to the GTP hydrolysis stage on the ribosome. This Ligilactobacillus salivarius (strain UCC118) (Lactobacillus salivarius) protein is Elongation factor Ts.